A 150-amino-acid polypeptide reads, in one-letter code: MNVILLDKIANLGSLGDQVSVKAGYARNFLLPFGKAVVANAANVEVFEARRAELEAKLAAELATATARAEKLAALEAVVIASKAGDEGKLFGSIGNRDIADAVTAAGVELAKSEVRLPLGALRTTGNFEVEVQVHTEVKAVVKVTVVAEA.

This sequence belongs to the bacterial ribosomal protein bL9 family.

Binds to the 23S rRNA. The polypeptide is Large ribosomal subunit protein bL9 (Shewanella denitrificans (strain OS217 / ATCC BAA-1090 / DSM 15013)).